The chain runs to 860 residues: Leucine--tRNA ligase (860 aa).

A 'HIGH' region motif is present at residues 42–52 (PYPSGRLHMGH). Residues 619-623 (KMSKS) carry the 'KMSKS' region motif. K622 serves as a coordination point for ATP.

It belongs to the class-I aminoacyl-tRNA synthetase family.

It localises to the cytoplasm. It carries out the reaction tRNA(Leu) + L-leucine + ATP = L-leucyl-tRNA(Leu) + AMP + diphosphate. In Yersinia pestis bv. Antiqua (strain Angola), this protein is Leucine--tRNA ligase.